A 154-amino-acid chain; its full sequence is H/ACA ribonucleoprotein complex subunit nhp2 (154 aa).

Phosphoserine is present on serine 119.

Belongs to the eukaryotic ribosomal protein eL8 family. As to quaternary structure, component of the small nucleolar ribonucleoprotein particles containing H/ACA-type snoRNAs (H/ACA snoRNPs).

It is found in the nucleus. The protein resides in the nucleolus. In terms of biological role, non-catalytic component of the H/ACA small nucleolar ribonucleoprotein (H/ACA snoRNP), which catalyzes pseudouridylation of rRNA and is required for ribosome biogenesis. This involves the isomerization of uridine such that the ribose is subsequently attached to C5, instead of the normal N1. Pseudouridine ('psi') residues may serve to stabilize the conformation of rRNAs. The H/ACA snoRNP complex also mediates pseudouridylation of other types of RNAs. The H/ACA snoRNP complex mediates pseudouridylation at position 93 in U2 snRNA. Directly binds H/ACA snoRNAs. The protein is H/ACA ribonucleoprotein complex subunit nhp2 (nhp2) of Schizosaccharomyces pombe (strain 972 / ATCC 24843) (Fission yeast).